The chain runs to 645 residues: UvrABC system protein B (645 aa).

The Helicase ATP-binding domain occupies 24 to 414 (AGLNDNKRDQ…LFVEQVIRPT (391 aa)). 37–44 (GVTGSGKT) lines the ATP pocket. A Beta-hairpin motif is present at residues 90–113 (YYDYYQPEAYLPQTDTYIEKDSVI). Positions 426 to 591 (AEAQVYDVVH…VLPKTIIKPI (166 aa)) constitute a Helicase C-terminal domain. The region spanning 610 to 645 (KDTVSSLRKQMLAHAKNLEFEEAAKIKNIIGRINNL) is the UVR domain.

It belongs to the UvrB family. Forms a heterotetramer with UvrA during the search for lesions. Interacts with UvrC in an incision complex.

It is found in the cytoplasm. The UvrABC repair system catalyzes the recognition and processing of DNA lesions. A damage recognition complex composed of 2 UvrA and 2 UvrB subunits scans DNA for abnormalities. Upon binding of the UvrA(2)B(2) complex to a putative damaged site, the DNA wraps around one UvrB monomer. DNA wrap is dependent on ATP binding by UvrB and probably causes local melting of the DNA helix, facilitating insertion of UvrB beta-hairpin between the DNA strands. Then UvrB probes one DNA strand for the presence of a lesion. If a lesion is found the UvrA subunits dissociate and the UvrB-DNA preincision complex is formed. This complex is subsequently bound by UvrC and the second UvrB is released. If no lesion is found, the DNA wraps around the other UvrB subunit that will check the other stand for damage. The protein is UvrABC system protein B of Wolbachia sp. subsp. Brugia malayi (strain TRS).